We begin with the raw amino-acid sequence, 88 residues long: Phage-like element PBSX protein XkdR (88 aa).

To B.subtilis YqbR.

This Bacillus subtilis (strain 168) protein is Phage-like element PBSX protein XkdR (xkdR).